Consider the following 241-residue polypeptide: MAFGPAAMGYDRAITIFSPDGSLYQVDYAFEAVKKGWTAIGIKSKSGVVIASEKRKAQSLLDVDSIEKVFLIDDHVGCSFAGLASDGRVLIDYARNIALQHRLIYDEPVSIDYLTKSVADVKQMYTQHGGVRPFGVALVIAGIDKSVPKLYMTEPSGQYMPYQAVAIGQGYYTATEFLEKNYKEDLTIEDTILLALKALSATLKPNEKLTPNTVEIGYASTQTGLFLKMTSEDKNMYLQKL.

The protein belongs to the peptidase T1A family. As to quaternary structure, the 20S proteasome core is composed of 14 alpha and 14 beta subunits that assemble into four stacked heptameric rings, resulting in a barrel-shaped structure. The two inner rings, each composed of seven catalytic beta subunits, are sandwiched by two outer rings, each composed of seven alpha subunits. The catalytic chamber with the active sites is on the inside of the barrel. Has a gated structure, the ends of the cylinder being occluded by the N-termini of the alpha-subunits. Is capped at one or both ends by the proteasome regulatory ATPase, PAN.

It localises to the cytoplasm. The formation of the proteasomal ATPase PAN-20S proteasome complex, via the docking of the C-termini of PAN into the intersubunit pockets in the alpha-rings, triggers opening of the gate for substrate entry. Interconversion between the open-gate and close-gate conformations leads to a dynamic regulation of the 20S proteasome proteolysis activity. Component of the proteasome core, a large protease complex with broad specificity involved in protein degradation. The polypeptide is Proteasome subunit alpha (Saccharolobus islandicus (strain M.16.4 / Kamchatka #3) (Sulfolobus islandicus)).